Reading from the N-terminus, the 114-residue chain is Large ribosomal subunit protein uL18 (114 aa).

This sequence belongs to the universal ribosomal protein uL18 family. In terms of assembly, part of the 50S ribosomal subunit; part of the 5S rRNA/L5/L18/L25 subcomplex. Contacts the 5S and 23S rRNAs.

Its function is as follows. This is one of the proteins that bind and probably mediate the attachment of the 5S RNA into the large ribosomal subunit, where it forms part of the central protuberance. The chain is Large ribosomal subunit protein uL18 from Bacteroides thetaiotaomicron (strain ATCC 29148 / DSM 2079 / JCM 5827 / CCUG 10774 / NCTC 10582 / VPI-5482 / E50).